Reading from the N-terminus, the 152-residue chain is Photosystem II extrinsic protein U, chloroplastic (152 aa).

The N-terminal 35 residues, 1-35 (MDSTAFVGAAAPLRVAAAARSTICMAAADDKPVVS), are a transit peptide targeting the chloroplast. Residues 36–59 (RRAALTGAAAAALAAVAGSLPALA) constitute a thylakoid transit peptide.

Belongs to the PsbU family. In terms of assembly, PSII is composed of 1 copy each of membrane proteins PsbA, PsbB, PsbC, PsbD, PsbE, PsbF, PsbH, PsbI, PsbJ, PsbK, PsbL, PsbM, PsbT, PsbX, PsbY, PsbZ, Psb30/Ycf12, at least 3 peripheral proteins of the oxygen-evolving complex and a large number of cofactors. It forms dimeric complexes. The oxygen-evolving complex in red algae is composed of PsbO (OEC33), PsbQ', cytochrome c-550 and PsbU. In terms of processing, predicted to be translocated into the thylakoid lumen by the Tat system.

Its subcellular location is the plastid. The protein resides in the chloroplast thylakoid membrane. One of the extrinsic, lumenal subunits of photosystem II (PSII). PSII is a light-driven water plastoquinone oxidoreductase, using light energy to abstract electrons from H(2)O, generating a proton gradient subsequently used for ATP formation. The extrinsic proteins stabilize the structure of photosystem II oxygen-evolving complex (OEC), the ion environment of oxygen evolution and protect the OEC against heat-induced inactivation. This is Photosystem II extrinsic protein U, chloroplastic from Pyropia yezoensis (Susabi-nori).